We begin with the raw amino-acid sequence, 522 residues long: Protein RCC2 (522 aa).

Residues 1 to 83 (MPRKKAAAAA…TAGKAGGAAV (83 aa)) form a disordered region. At serine 16 the chain carries Phosphoserine. The residue at position 20 (threonine 20) is a Phosphothreonine. Over residues 24–36 (GPRKRGGPAGRKR) the composition is skewed to basic residues. A phosphoserine mark is found at serine 43, serine 44, serine 45, serine 46, serine 50, and serine 51. Residues 71-82 (RPATAGKAGGAA) are compositionally biased toward low complexity. 2 positions are modified to N6-acetyllysine: lysine 92 and lysine 124. 7 RCC1 repeats span residues 103–165 (KGQL…SLLI), 168–219 (EGKL…ALTE), 221–271 (GSVF…IMDC), 273–347 (GNLY…VLDS), 348–401 (QKRV…AVSE), 403–447 (GGLF…VAAD), and 448–501 (ESTI…VIAR). The residue at position 293 (lysine 293) is an N6-acetyllysine. The interval 318–325 (KTKDGQIL) is required for interaction with RAC1. Residue threonine 342 is modified to Phosphothreonine. At lysine 377 the chain carries N6-acetyllysine. Over residues 502 to 515 (DESETEKEKIKKLP) the composition is skewed to basic and acidic residues. Positions 502–522 (DESETEKEKIKKLPEYNPRTL) are disordered.

In terms of assembly, interacts with RAC1. Interacts with nucleotide-free and with GDP and GTP-bound forms of RAC1, with a slight preference for GDP-bound RAC1. Binds preferentially to the nucleotide-free form of RAC1. Interacts with CORO1C. Interacts with microtubules.

Its subcellular location is the nucleus. The protein localises to the nucleolus. It localises to the cytoplasm. The protein resides in the cytoskeleton. It is found in the chromosome. Its subcellular location is the centromere. The protein localises to the spindle. It localises to the midbody. The protein resides in the cell membrane. Multifunctional protein that may affect its functions by regulating the activity of small GTPases, such as RAC1 and RALA. Required for normal progress through the cell cycle, both during interphase and during mitosis. Required for the presence of normal levels of MAD2L1, AURKB and BIRC5 on inner centromeres during mitosis, and for normal attachment of kinetochores to mitotic spindles. Required for normal organization of the microtubule cytoskeleton in interphase cells. Functions as guanine nucleotide exchange factor (GEF) for RALA. Interferes with the activation of RAC1 by guanine nucleotide exchange factors. Prevents accumulation of active, GTP-bound RAC1, and suppresses RAC1-mediated reorganization of the actin cytoskeleton and formation of membrane protrusions. Required for normal cellular responses to contacts with the extracellular matrix of adjacent cells, and for directional cell migration in response to a fibronectin gradient (in vitro). In Homo sapiens (Human), this protein is Protein RCC2 (RCC2).